The sequence spans 365 residues: MEKYELLKDIGSGNFGVARLMRNRETKELVAMKYIPRGLKIDENVAREIINHRSLRHPNIIRFKEVVLTPTHLAIVMEYAAGGELFDRICSAGRFSEDESRYFFQQLICGVSYCHFMQICHRDLKLENTLLDGSPAPRLKICDFGYSKSSLLHSKPKSTVGTPAYIAPEVLSRREYDGKMADVWSCGVTLYVMLVGAYPFEDPDDPKNFRKTIGRIVSIQYKIPEYVHISQDCRQLLSRIFVANPAKRITIREIRNHPWFMKNLPRELTEAAQAKYYKKDNSARTFSDQTVDEIMKIVQEAKTPPPSSTPVAGFGWTEEEEQEDGKNPDDDEGDRDEEEGEEGDSEDEYTKQVKQAHASCDLQKS.

Residues 4 to 260 (YELLKDIGSG…IREIRNHPWF (257 aa)) enclose the Protein kinase domain. Residues 10 to 18 (IGSGNFGVA) and lysine 33 each bind ATP. Catalysis depends on aspartate 123, which acts as the Proton acceptor. Residues 298-365 (VQEAKTPPPS…AHASCDLQKS (68 aa)) form a disordered region. The span at 317–347 (TEEEEQEDGKNPDDDEGDRDEEEGEEGDSED) shows a compositional bias: acidic residues.

It belongs to the protein kinase superfamily. Ser/Thr protein kinase family. In terms of assembly, interacts with BZIP46. Post-translationally, may be phosphorylated. As to expression, expressed in leaf blades and leaf sheaths. Expressed in shoots and roots of young seedlings.

It catalyses the reaction L-seryl-[protein] + ATP = O-phospho-L-seryl-[protein] + ADP + H(+). The catalysed reaction is L-threonyl-[protein] + ATP = O-phospho-L-threonyl-[protein] + ADP + H(+). With respect to regulation, activated by hyperosmotic stress. May play a role in signal transduction of hyperosmotic response. Can phosphorylate ABI5 in vitro. Can phosphorylate BZIP46 in vitro. In Oryza sativa subsp. japonica (Rice), this protein is Serine/threonine-protein kinase SAPK6.